Consider the following 151-residue polypeptide: HTH-type transcriptional regulator TcaR (151 aa).

The HTH marR-type domain occupies methionine 1 to histidine 142. The H-T-H motif DNA-binding region spans isoleucine 54–aspartate 77.

Its function is as follows. Involved in the antibiotic teicoplanin susceptibility. Inactivation of the tcaRAB operon leads to teicoplanin resistance. Functionally, is a weak negative regulator of transcription of the icaABD operon. In Staphylococcus aureus (strain COL), this protein is HTH-type transcriptional regulator TcaR (tcaR).